We begin with the raw amino-acid sequence, 272 residues long: NH(3)-dependent NAD(+) synthetase (272 aa).

45 to 52 contributes to the ATP binding site; sequence GISGGQDS. Residue Asp51 participates in Mg(2+) binding. A deamido-NAD(+)-binding site is contributed by Arg138. Thr158 is a binding site for ATP. A Mg(2+)-binding site is contributed by Glu163. The deamido-NAD(+) site is built by Lys171 and Asp178. ATP contacts are provided by Lys187 and Thr209. Position 258–259 (258–259) interacts with deamido-NAD(+); the sequence is HK.

Belongs to the NAD synthetase family. Homodimer.

The enzyme catalyses deamido-NAD(+) + NH4(+) + ATP = AMP + diphosphate + NAD(+) + H(+). The protein operates within cofactor biosynthesis; NAD(+) biosynthesis; NAD(+) from deamido-NAD(+) (ammonia route): step 1/1. Functionally, catalyzes the ATP-dependent amidation of deamido-NAD to form NAD. Uses ammonia as a nitrogen source. This chain is NH(3)-dependent NAD(+) synthetase, found in Bacillus mycoides (strain KBAB4) (Bacillus weihenstephanensis).